The primary structure comprises 750 residues: Neprilysin (750 aa).

The span at 1-14 shows a compositional bias: polar residues; that stretch reads MGKSESQMDITDIN. The disordered stretch occupies residues 1–20; that stretch reads MGKSESQMDITDINTPKPKK. Gly-2 carries N-myristoyl glycine lipidation. Topologically, residues 2–28 are cytoplasmic; sequence GKSESQMDITDINTPKPKKKQRWTPLE. Ser-4 and Ser-6 each carry phosphoserine. Positions 16 to 23 match the Stop-transfer sequence motif; the sequence is PKPKKKQR. Residues 29–51 traverse the membrane as a helical; Signal-anchor for type II membrane protein segment; that stretch reads ISLSVLVLLLTIIAVTMIALYAT. The Extracellular portion of the chain corresponds to 52 to 750; that stretch reads YDDGICKSSD…MNPEKKCRVW (699 aa). One can recognise a Peptidase M13 domain in the interval 56–750; sequence ICKSSDCIKS…MNPEKKCRVW (695 aa). Intrachain disulfides connect Cys-57–Cys-62, Cys-80–Cys-735, Cys-88–Cys-695, Cys-143–Cys-411, Cys-234–Cys-242, and Cys-621–Cys-747. Arg-103 lines the a peptide pocket. N-linked (GlcNAc...) asparagine glycosylation is present at Asn-145. N-linked (GlcNAc...) asparagine glycosylation is found at Asn-285 and Asn-325. His-584 serves as a coordination point for Zn(2+). Glu-585 is a catalytic residue. His-588 provides a ligand contact to Zn(2+). Residue Asn-628 is glycosylated (N-linked (GlcNAc...) asparagine). A Zn(2+)-binding site is contributed by Glu-647. Catalysis depends on Asp-651, which acts as the Proton donor.

This sequence belongs to the peptidase M13 family. The cofactor is Zn(2+). Post-translationally, myristoylation is a determinant of membrane targeting. Glycosylation at Asn-628 is necessary both for surface expression and neutral endopeptidase activity.

It is found in the cell membrane. The catalysed reaction is Preferential cleavage of polypeptides between hydrophobic residues, particularly with Phe or Tyr at P1'.. It catalyses the reaction substance P + H2O = substance P(1-9) + L-Leu-L-Met-NH2. The enzyme catalyses substance P + H2O = substance P(1-7) + L-Phe-Gly-L-Leu-L-Met-NH2. It carries out the reaction neurotensin + H2O = neurotensin(1-11) + L-isoleucyl-L-leucine. The catalysed reaction is neurotensin + H2O = neurotensin(1-10) + L-tyrosyl-L-isoleucyl-L-leucine. With respect to regulation, inhibited in a dose dependent manner by opiorphin. Activated by K49-P1-20, a twenty-residue synthetic peptide shortened from the snake B.asper myotoxin II. Functionally, thermolysin-like specificity, but is almost confined on acting on polypeptides of up to 30 amino acids. Biologically important in the destruction of opioid peptides such as Met- and Leu-enkephalins by cleavage of a Gly-Phe bond. Catalyzes cleavage of bradykinin, substance P and neurotensin peptides. Able to cleave angiotensin-1, angiotensin-2 and angiotensin 1-9. Involved in the degradation of atrial natriuretic factor (ANF) and brain natriuretic factor (BNP(1-32)). Displays UV-inducible elastase activity toward skin preelastic and elastic fibers. This chain is Neprilysin, found in Homo sapiens (Human).